A 401-amino-acid chain; its full sequence is MAATDRLNQTSDILSQSMKKTDSSMSVVTAENPYKVSVVGSGNWGTTIAKVVAENTKEKPELFQERVDMWVFEEQIDGTPLAQIINTKHQNVKYLPNIDLPDNLVANPDLIATTKDADVIVFNVPHQFLGRIVAQMKGQIKPTARAVSCLKGFEVGPKGVQLLSDYVTQELGIECGALSGANLAPEVAKEHWSETTVAYHIPDDFKGDGKDIDHRVLKQLFHRPYFHVNVIDDVAGISIAGALKNVVALGCGFVTGLGWGNNAAAAIQRVGLGEIIKFGRMFFPESKVETYYQESAGVADLITTCSGGRNVRVATEMAKTGKSGEQVEKDILNGQSAQGLVTCKEVHQWLESSGNTEDFPLFEAVYQITYENVPMKELPSMIEELDIDSTSKCVLSYKMGL.

Residues 40-45 (GSGNWG), Phe128, Lys151, and Ala184 contribute to the NAD(+) site. Lys151 contributes to the substrate binding site. Lys244 acts as the Proton acceptor in catalysis. Arg309 and Gln338 together coordinate NAD(+). 309-310 (RN) contributes to the substrate binding site.

It belongs to the NAD-dependent glycerol-3-phosphate dehydrogenase family.

The protein resides in the cytoplasm. The catalysed reaction is sn-glycerol 3-phosphate + NAD(+) = dihydroxyacetone phosphate + NADH + H(+). The chain is Glycerol-3-phosphate dehydrogenase [NAD(+)] 1 (GPD1) from Zygosaccharomyces rouxii.